We begin with the raw amino-acid sequence, 823 residues long: Kinesin-like protein KIN-7N (823 aa).

Residues Lys3–Ile325 enclose the Kinesin motor domain. ATP is bound at residue Gly83–Thr90. 3 coiled-coil regions span residues Leu341–Asn414, Arg527–Gln557, and Glu696–Glu786.

The protein belongs to the TRAFAC class myosin-kinesin ATPase superfamily. Kinesin family. KIN-7 subfamily.

The polypeptide is Kinesin-like protein KIN-7N (Arabidopsis thaliana (Mouse-ear cress)).